Consider the following 94-residue polypeptide: Elongation factor 1-beta (94 aa).

Belongs to the EF-1-beta/EF-1-delta family.

Its function is as follows. Promotes the exchange of GDP for GTP in EF-1-alpha/GDP, thus allowing the regeneration of EF-1-alpha/GTP that could then be used to form the ternary complex EF-1-alpha/GTP/AAtRNA. This is Elongation factor 1-beta from Ignicoccus hospitalis (strain KIN4/I / DSM 18386 / JCM 14125).